A 290-amino-acid chain; its full sequence is ATP synthase gamma chain (290 aa).

This sequence belongs to the ATPase gamma chain family. F-type ATPases have 2 components, CF(1) - the catalytic core - and CF(0) - the membrane proton channel. CF(1) has five subunits: alpha(3), beta(3), gamma(1), delta(1), epsilon(1). CF(0) has three main subunits: a, b and c.

Its subcellular location is the cell inner membrane. Functionally, produces ATP from ADP in the presence of a proton gradient across the membrane. The gamma chain is believed to be important in regulating ATPase activity and the flow of protons through the CF(0) complex. The protein is ATP synthase gamma chain of Delftia acidovorans (strain DSM 14801 / SPH-1).